The sequence spans 135 residues: Rheacalcin-1 (135 aa).

3 disulfides stabilise this stretch: Cys-6-Cys-17, Cys-34-Cys-131, and Cys-106-Cys-123. Positions 13 to 132 (FRGNCYGYFR…CSERNAFICK (120 aa)) constitute a C-type lectin domain.

The protein localises to the secreted. It localises to the extracellular space. The protein resides in the extracellular matrix. This Rhea americana (Greater rhea) protein is Rheacalcin-1.